The sequence spans 528 residues: Esterase PE16 (528 aa).

The PE domain maps to 1–93; that stretch reads MSFVFAVPEM…AGWYVDAEAA (93 aa). Positions 94–143 are linker; the sequence is NAALVDTAATGASELGSGGRTALILGSTGTPRPPFDYMQQVYDRYIAPHY. In terms of domain architecture, PE-PPE spans 149–369; the sequence is SGLYTPAQFQ…LRAIIELGYD (221 aa). Ser199 is a catalytic residue. The helical transmembrane segment at 503 to 523 threads the bilayer; the sequence is IALLVFAAGIPAVAAVAILTG.

It belongs to the mycobacterial PE family.

Its subcellular location is the membrane. The catalysed reaction is a hexanoate ester + H2O = an aliphatic alcohol + hexanoate + H(+). It catalyses the reaction an octanoate ester + H2O = an aliphatic alcohol + octanoate + H(+). It carries out the reaction a butanoate ester + H2O = an aliphatic alcohol + butanoate + H(+). Its activity is regulated as follows. Esterase activity is significantly inhibited by the serine modifier phenylmethylsulfonyl fluoride (PMSF). Esterase that hydrolyzes short to medium chain fatty acid esters with the highest specific activity for p-nitrophenyl caproate (pNPC6). Has lower activity with p-nitrophenyl caprylate (pNPC8) and p-nitrophenyl butyrate (pNPC4). Has weak activity with p-nitrophenyl caprate (pNPC10) and p-nitrophenyl laurate (pNPC12). Does not possess lipolytic activity and cutinase activity. The protein is Esterase PE16 of Mycobacterium tuberculosis (strain ATCC 25618 / H37Rv).